The sequence spans 323 residues: Transposase for insertion sequence element IS6120 (323 aa).

The disordered stretch occupies residues 300 to 323; that stretch reads ERPTDITPPTSPSDGGQHAGTEVA. Low complexity predominate over residues 304–313; that stretch reads DITPPTSPSD.

It belongs to the transposase mutator family.

Functionally, required for the transposition of the insertion element. This is Transposase for insertion sequence element IS6120 from Mycolicibacterium smegmatis (Mycobacterium smegmatis).